We begin with the raw amino-acid sequence, 145 residues long: Transcriptional regulator MraZ (145 aa).

SpoVT-AbrB domains follow at residues T5–E49 and T78–V121.

This sequence belongs to the MraZ family. In terms of assembly, forms oligomers.

The protein localises to the cytoplasm. Its subcellular location is the nucleoid. This Ureaplasma urealyticum serovar 10 (strain ATCC 33699 / Western) protein is Transcriptional regulator MraZ.